Reading from the N-terminus, the 465-residue chain is Gamma-aminobutyric acid receptor subunit gamma-1 (465 aa).

An N-terminal signal peptide occupies residues 1–20 (MGSGKAFLFSPSLLWSQTRG). The Extracellular segment spans residues 21–273 (VRLIFLLLTL…FDLSRRMGYF (253 aa)). N-linked (GlcNAc...) asparagine glycosylation is found at N50 and N127. A disulfide bridge links C188 with C202. N245 is a glycosylation site (N-linked (GlcNAc...) asparagine). A helical transmembrane segment spans residues 274 to 294 (TIQTYIPCILTVVLSWVSFWI). At 295–300 (NKDAVP) the chain is on the cytoplasmic side. Residues 301–320 (ARTSLGITTVLTMTTLSTIA) traverse the membrane as a helical segment. At 321–328 (RKSLPKVS) the chain is on the extracellular side. Residues 329-349 (YVTAMDLFVSVCFIFVFAALM) form a helical membrane-spanning segment. Topologically, residues 350 to 444 (EYGTLHYFTS…RIAKIDSYSR (95 aa)) are cytoplasmic. The helical transmembrane segment at 445–465 (IFFPTAFALFNLVYWVGYLYL) threads the bilayer.

It belongs to the ligand-gated ion channel (TC 1.A.9) family. Gamma-aminobutyric acid receptor (TC 1.A.9.5) subfamily. GABRG1 sub-subfamily. As to quaternary structure, heteropentamer, formed by a combination of alpha (GABRA1-6), beta (GABRB1-3), gamma (GABRG1-3), delta (GABRD), epsilon (GABRE), rho (GABRR1-3), pi (GABRP) and theta (GABRQ) chains, each subunit exhibiting distinct physiological and pharmacological properties. In terms of processing, may be palmitoylated. As to expression, expressed in brain.

It localises to the postsynaptic cell membrane. The protein resides in the cell membrane. It carries out the reaction chloride(in) = chloride(out). Its function is as follows. Gamma subunit of the heteropentameric ligand-gated chloride channel gated by gamma-aminobutyric acid (GABA), a major inhibitory neurotransmitter in the brain. GABA-gated chloride channels, also named GABA(A) receptors (GABAAR), consist of five subunits arranged around a central pore and contain GABA active binding site(s) located at the alpha and beta subunit interface(s). When activated by GABA, GABAARs selectively allow the flow of chloride anions across the cell membrane down their electrochemical gradient. Chloride influx into the postsynaptic neuron following GABAAR opening decreases the neuron ability to generate a new action potential, thereby reducing nerve transmission. In Mus musculus (Mouse), this protein is Gamma-aminobutyric acid receptor subunit gamma-1.